The chain runs to 219 residues: Probable GTP-binding protein EngB (219 aa).

In terms of domain architecture, EngB-type G spans 24–207 (VQPEIAFAGR…HALIESWVRP (184 aa)). GTP contacts are provided by residues 32 to 39 (GRSNAGKS), 59 to 63 (GRTQH), 81 to 84 (DLPG), 148 to 151 (TKCD), and 186 to 188 (FSA). Mg(2+) contacts are provided by Ser39 and Thr61.

Belongs to the TRAFAC class TrmE-Era-EngA-EngB-Septin-like GTPase superfamily. EngB GTPase family. The cofactor is Mg(2+).

Its function is as follows. Necessary for normal cell division and for the maintenance of normal septation. The sequence is that of Probable GTP-binding protein EngB from Burkholderia multivorans (strain ATCC 17616 / 249).